The primary structure comprises 222 residues: Cytidylate kinase (222 aa).

7–15 (GPAGAGKST) contacts ATP.

Belongs to the cytidylate kinase family. Type 1 subfamily.

Its subcellular location is the cytoplasm. The catalysed reaction is CMP + ATP = CDP + ADP. It carries out the reaction dCMP + ATP = dCDP + ADP. The chain is Cytidylate kinase from Carboxydothermus hydrogenoformans (strain ATCC BAA-161 / DSM 6008 / Z-2901).